The sequence spans 122 residues: Putative MOB kinase activator-like 2B (122 aa).

Zn(2+)-binding residues include H69 and H74.

This sequence belongs to the MOB1/phocein family.

The protein resides in the nucleus. It localises to the cytoplasm. It is found in the cytoskeleton. Its subcellular location is the phragmoplast. The sequence is that of Putative MOB kinase activator-like 2B from Arabidopsis thaliana (Mouse-ear cress).